We begin with the raw amino-acid sequence, 359 residues long: MLENRVKTKQIFIGGVAIGGDAPISTQSMTFSKTADIESTKNQIDRLKLAGADLVRVAVSNEKDALALKELKKVSPLPLIADIHFHYKFALIAAQSVDAIRINPGNIGSKDKIKAVVDACKEKNIPIRIGVNAGSLEKQFDQKYGPTPKGMVESALYNAKLLEDLDFTNFKISLKASDVMRTIEAYRMLRPLVIYPFHLGVTEAGNLFSSSIKSAMALGGLLMEGIGDTMRVSITGELENEIKVARAILRHSGRLKEGINWISCPTCGRIEANLVDMASKVEKRLSHIKTPLDISVMGCVVNALGEAKHADMAIAFGNRSGLIIKEGKVIHKLAEKDLFETFVIEVENLAKEREKSLKD.

Residues Cys-264, Cys-267, Cys-299, and Glu-306 each contribute to the [4Fe-4S] cluster site.

This sequence belongs to the IspG family. [4Fe-4S] cluster serves as cofactor.

It carries out the reaction (2E)-4-hydroxy-3-methylbut-2-enyl diphosphate + oxidized [flavodoxin] + H2O + 2 H(+) = 2-C-methyl-D-erythritol 2,4-cyclic diphosphate + reduced [flavodoxin]. It participates in isoprenoid biosynthesis; isopentenyl diphosphate biosynthesis via DXP pathway; isopentenyl diphosphate from 1-deoxy-D-xylulose 5-phosphate: step 5/6. Functionally, converts 2C-methyl-D-erythritol 2,4-cyclodiphosphate (ME-2,4cPP) into 1-hydroxy-2-methyl-2-(E)-butenyl 4-diphosphate. The chain is 4-hydroxy-3-methylbut-2-en-1-yl diphosphate synthase (flavodoxin) from Helicobacter pylori (strain G27).